Here is a 303-residue protein sequence, read N- to C-terminus: Counting factor 50 (303 aa).

The N-terminal stretch at 1–24 is a signal peptide; that stretch reads MNKMNNIFLIISSIILSIVIFVSG. Residues 28–240 enclose the Ch-type lysozyme domain; it reads IDFSSEISVG…CSTSSGSASG (213 aa). N67 carries N-linked (GlcNAc...) asparagine glycosylation. E125 is a catalytic residue. N170 carries N-linked (GlcNAc...) asparagine glycosylation. The interval 226–303 is S-G-S motif repeats; sequence GSGSGCSTSS…GSGTGSGSSI (78 aa). The span at 236-292 shows a compositional bias: low complexity; that stretch reads GSASGSASGSASGSASGSNSGSSNSGSSNSGSSNSGSNSGSSNSGSGNSGSSNSGSA. Positions 236–303 are disordered; the sequence is GSASGSASGS…GSGTGSGSSI (68 aa). Residues 293–303 are compositionally biased toward gly residues; that stretch reads SGSGTGSGSSI.

This sequence belongs to the glycosyl hydrolase 25 family. In terms of assembly, monomer. Component of the counting factor (CF) complex, which includes cf60, cf50, cf45-1 and ctnA.

Its subcellular location is the secreted. It catalyses the reaction Hydrolysis of (1-&gt;4)-beta-linkages between N-acetylmuramic acid and N-acetyl-D-glucosamine residues in a peptidoglycan and between N-acetyl-D-glucosamine residues in chitodextrins.. Cell-counting factor that limits the maximum size of the multicellular structure during aggregation. Has a very low lysozyme activity. The chain is Counting factor 50 (cf50-1) from Dictyostelium discoideum (Social amoeba).